Consider the following 267-residue polypeptide: Ribosomal RNA small subunit methyltransferase A (267 aa).

Positions 18, 20, 45, 66, 91, and 112 each coordinate S-adenosyl-L-methionine.

This sequence belongs to the class I-like SAM-binding methyltransferase superfamily. rRNA adenine N(6)-methyltransferase family. RsmA subfamily.

The protein localises to the cytoplasm. The catalysed reaction is adenosine(1518)/adenosine(1519) in 16S rRNA + 4 S-adenosyl-L-methionine = N(6)-dimethyladenosine(1518)/N(6)-dimethyladenosine(1519) in 16S rRNA + 4 S-adenosyl-L-homocysteine + 4 H(+). Functionally, specifically dimethylates two adjacent adenosines (A1518 and A1519) in the loop of a conserved hairpin near the 3'-end of 16S rRNA in the 30S particle. May play a critical role in biogenesis of 30S subunits. The protein is Ribosomal RNA small subunit methyltransferase A of Shewanella amazonensis (strain ATCC BAA-1098 / SB2B).